The following is an 826-amino-acid chain: E3 ubiquitin-protein ligase SH3RF1 (826 aa).

The RING-type zinc finger occupies 12–53 (CPVCLERLDASAKVLPCQHTFCKRCLLGIVSSRKELRCPECR). The interval 80–130 (PRKAGDGGSAGNSTNALRAQGSVTTNGGLNDAQNTQSGQQRIQARSPPVRG) is disordered. Positions 90–122 (GNSTNALRAQGSVTTNGGLNDAQNTQSGQQRIQ) are enriched in polar residues. 2 consecutive SH3 domains span residues 132–191 (PQLP…IIKP) and 194–257 (QPPP…FNSA). The segment at 266 to 319 (KPSGADTGEGSSGTSHSGNSQKQADAKKNTKKRHSFTSLTMSNKSSQSVQNRHS) is disordered. Residues 273–285 (GEGSSGTSHSGNS) are compositionally biased toward low complexity. A compositionally biased stretch (polar residues) spans 301–317 (FTSLTMSNKSSQSVQNR). The SH3 3 domain occupies 398–459 (ARPSVFIAIY…PGNYVAPVTR (62 aa)). Disordered stretches follow at residues 647–694 (NSAA…QTNS) and 725–759 (DSVS…CSSL). Basic and acidic residues predominate over residues 652–663 (KQDKDSKKEKKG). The 60-residue stretch at 767–826 (RPCERYRVMVSYPPQSEAELELKEGDIVFVHKKREDGWFKGTLQRNGKTGLFPGSFVENI) folds into the SH3 4 domain.

The protein belongs to the SH3RF family. Autoubiquitinated. Ubiquitinated by SH3RF2, leading to proteasome-mediated degradation.

Its subcellular location is the cytoplasm. It is found in the perinuclear region. The protein localises to the cell projection. The protein resides in the lamellipodium. It localises to the golgi apparatus. Its subcellular location is the trans-Golgi network. The enzyme catalyses S-ubiquitinyl-[E2 ubiquitin-conjugating enzyme]-L-cysteine + [acceptor protein]-L-lysine = [E2 ubiquitin-conjugating enzyme]-L-cysteine + N(6)-ubiquitinyl-[acceptor protein]-L-lysine.. The protein operates within protein modification; protein ubiquitination. Functionally, has E3 ubiquitin-protein ligase activity. In the absence of an external substrate, it can catalyze self-ubiquitination. Acts as a scaffold protein that contributes to the effective activation of the JNK signaling pathway. Plays an essential role in the anterior neural development. The sequence is that of E3 ubiquitin-protein ligase SH3RF1 (sh3rf1) from Xenopus laevis (African clawed frog).